The following is a 314-amino-acid chain: Ribosomal RNA small subunit methyltransferase H (314 aa).

Residues 33–35 (GGH), Asp-52, Phe-84, Asp-105, and Gln-112 each bind S-adenosyl-L-methionine.

This sequence belongs to the methyltransferase superfamily. RsmH family.

Its subcellular location is the cytoplasm. The enzyme catalyses cytidine(1402) in 16S rRNA + S-adenosyl-L-methionine = N(4)-methylcytidine(1402) in 16S rRNA + S-adenosyl-L-homocysteine + H(+). In terms of biological role, specifically methylates the N4 position of cytidine in position 1402 (C1402) of 16S rRNA. This chain is Ribosomal RNA small subunit methyltransferase H, found in Lactobacillus delbrueckii subsp. bulgaricus (strain ATCC 11842 / DSM 20081 / BCRC 10696 / JCM 1002 / NBRC 13953 / NCIMB 11778 / NCTC 12712 / WDCM 00102 / Lb 14).